The sequence spans 270 residues: 2-oxoglutarate synthase subunit KorB (270 aa).

As to quaternary structure, heterotetramer of the KorA, KorB, KorC and KorD subunits.

The catalysed reaction is 2 oxidized [2Fe-2S]-[ferredoxin] + 2-oxoglutarate + CoA = succinyl-CoA + 2 reduced [2Fe-2S]-[ferredoxin] + CO2 + H(+). The chain is 2-oxoglutarate synthase subunit KorB (korB) from Methanocaldococcus jannaschii (strain ATCC 43067 / DSM 2661 / JAL-1 / JCM 10045 / NBRC 100440) (Methanococcus jannaschii).